Here is a 345-residue protein sequence, read N- to C-terminus: Putative pyridoxal reductase (345 aa).

The Proton donor role is filled by tyrosine 60.

The protein belongs to the aldo/keto reductase family.

It localises to the cytoplasm. The protein resides in the nucleus. The catalysed reaction is pyridoxine + NADP(+) = pyridoxal + NADPH + H(+). It participates in cofactor degradation; B6 vitamer degradation; pyridoxal from pyridoxine (dehydrogenase route): step 1/1. Its function is as follows. Catalyzes the reduction of pyridoxal (PL) with NADPH and oxidation of pyridoxine (PN) with NADP(+). This is Putative pyridoxal reductase from Saccharomyces cerevisiae (strain ATCC 204508 / S288c) (Baker's yeast).